Reading from the N-terminus, the 524-residue chain is Putative ribose/galactose/methyl galactoside import ATP-binding protein 1 (524 aa).

ABC transporter domains follow at residues 29 to 270 and 280 to 524; these read LEMR…VGRT and VPIG…TGGH. Residue 61-68 coordinates ATP; sequence GENGAGKS.

This sequence belongs to the ABC transporter superfamily. Carbohydrate importer 2 (CUT2) (TC 3.A.1.2) family.

The protein resides in the cell inner membrane. It catalyses the reaction D-ribose(out) + ATP + H2O = D-ribose(in) + ADP + phosphate + H(+). The catalysed reaction is D-galactose(out) + ATP + H2O = D-galactose(in) + ADP + phosphate + H(+). In terms of biological role, part of an ABC transporter complex involved in carbohydrate import. Could be involved in ribose, galactose and/or methyl galactoside import. Responsible for energy coupling to the transport system. The chain is Putative ribose/galactose/methyl galactoside import ATP-binding protein 1 from Rhizobium etli (strain ATCC 51251 / DSM 11541 / JCM 21823 / NBRC 15573 / CFN 42).